Reading from the N-terminus, the 114-residue chain is Lymphotactin (114 aa).

An N-terminal signal peptide occupies residues 1–21 (MRLLLLTFLGVCCLTPWVVEG). A disulfide bond links C32 and C69. Residues 92–114 (KNMAETVPTGAQRSTSTAITLTG) are disordered. A compositionally biased stretch (polar residues) spans 100–114 (TGAQRSTSTAITLTG).

Belongs to the intercrine gamma family. Expressed in activated CD8(+) T cells. In the thymus, expressed by medullary thymic epithelial cells.

It is found in the secreted. Its function is as follows. Chemotactic activity for lymphocytes but not for monocytes or neutrophils. In thymus, mediates medullary accumulation of thymic dendritic cells and contributes to regulatoy T cell development, playing a role in self-tolerance establishment. This Mus musculus (Mouse) protein is Lymphotactin (Xcl1).